A 167-amino-acid chain; its full sequence is Ribosome maturation factor RimM (167 aa).

One can recognise a PRC barrel domain in the interval 94 to 165; that stretch reads ENEFYYSDII…KIIITPMEGL (72 aa).

Belongs to the RimM family. In terms of assembly, binds ribosomal protein uS19.

The protein localises to the cytoplasm. Functionally, an accessory protein needed during the final step in the assembly of 30S ribosomal subunit, possibly for assembly of the head region. Essential for efficient processing of 16S rRNA. May be needed both before and after RbfA during the maturation of 16S rRNA. It has affinity for free ribosomal 30S subunits but not for 70S ribosomes. The sequence is that of Ribosome maturation factor RimM from Staphylococcus aureus (strain MRSA252).